Here is a 152-residue protein sequence, read N- to C-terminus: Ribonuclease pancreatic gamma-type (152 aa).

Positions 1–25 (MGLEKSFILFSLLVLVLGCVQPSLV) are cleaved as a signal peptide. Residues 26 to 48 (GESKESPSEKFKRRHMDEEGPYQ) are disordered. A compositionally biased stretch (basic and acidic residues) spans 27–43 (ESKESPSEKFKRRHMDE). 2 residues coordinate substrate: lysine 35 and arginine 38. Histidine 40 functions as the Proton acceptor in the catalytic mechanism. 4 disulfides stabilise this stretch: cysteine 54-cysteine 112, cysteine 68-cysteine 123, cysteine 86-cysteine 138, and cysteine 93-cysteine 100. Substrate is bound by residues 69–73 (KPLNT) and lysine 94. The active-site Proton donor is histidine 147.

Belongs to the pancreatic ribonuclease family. As to quaternary structure, monomer.

The protein localises to the secreted. The enzyme catalyses an [RNA] containing cytidine + H2O = an [RNA]-3'-cytidine-3'-phosphate + a 5'-hydroxy-ribonucleotide-3'-[RNA].. The catalysed reaction is an [RNA] containing uridine + H2O = an [RNA]-3'-uridine-3'-phosphate + a 5'-hydroxy-ribonucleotide-3'-[RNA].. In terms of biological role, endonuclease that catalyzes the cleavage of RNA on the 3' side of pyrimidine nucleotides. Acts on single-stranded and double-stranded RNA. The sequence is that of Ribonuclease pancreatic gamma-type from Rattus fuscipes (Bush rat).